The following is a 550-amino-acid chain: Thioredoxin domain-containing protein 2 (550 aa).

The tract at residues 1–50 is disordered; that stretch reads MFKKNQKLSKDKGLEVNSVQAGAPEESDVKLNNGGKANERGSNEFLDTAQ. 2 positions are modified to phosphoserine: S42 and S51. Residues 63–428 are disordered; sequence MLHMSTEESE…IKSSEDVQPS (366 aa). 3 stretches are compositionally biased toward polar residues: residues 73–87, 96–105, and 112–140; these read PPQQ…SENT, PKSSTKNTQL, and KTSS…QGST. A run of 22 repeats spans residues 104-118, 119-133, 134-148, 149-163, 164-178, 179-193, 194-208, 209-223, 224-238, 239-252, 253-267, 268-282, 283-297, 298-312, 313-327, 328-342, 343-357, 358-384, 385-399, 400-412, 413-425, and 426-440. Positions 104–440 are 22 X 15 AA approximate tandem repeat of Q-P-K-X-G-D-I-P-K-S-[PS]-E-[KE]-X-I; that stretch reads QLKQEDISKT…EIFPFEAEIE (337 aa). 4 stretches are compositionally biased toward basic and acidic residues: residues 148–205, 217–259, 277–304, and 313–348; these read THDR…KSLE, KSSE…ESET, QVKD…ENKI, and QPKE…KEEI. A Phosphoserine modification is found at S158. A phosphoserine mark is found at S351 and S379. The Thioredoxin domain maps to 401-550; that stretch reads KEEITVSPED…KLEKSIAELK (150 aa). The residue at position 407 (S407) is a Phosphoserine. C477 and C480 are joined by a disulfide.

In terms of tissue distribution, testis-specific. Strongly expressed in the testicular seminiferous tubules, mostly in the round spermatids.

Its subcellular location is the cytoplasm. Its function is as follows. Probably plays a regulatory role in sperm development. May participate in regulation of fibrous sheath (FS) assembly by supporting the formation of disulfide bonds during sperm tail morphogenesis. May also be required to rectify incorrect disulfide pairing and generate suitable pairs between the FS constituents. Can reduce disulfide bonds in vitro in the presence of NADP and thioredoxin reductase. This chain is Thioredoxin domain-containing protein 2 (Txndc2), found in Rattus norvegicus (Rat).